A 288-amino-acid chain; its full sequence is Putative sugar uptake protein gbs2116 (288 aa).

The next 10 membrane-spanning stretches (helical) occupy residues 4-26 (LLIA…KIGG), 33-50 (FGMT…WLFK), 55-72 (TASL…WSVG), 85-107 (VSVA…GALV), 117-134 (FILG…FYFS), 154-171 (FATI…AVLF), 181-200 (AVIL…FMKF), 207-229 (VVVK…LLAA), 234-256 (LAIA…ILFL), and 268-285 (VVMG…LGIV).

Belongs to the GRP transporter (TC 2.A.7.5) family.

It is found in the cell membrane. The chain is Putative sugar uptake protein gbs2116 from Streptococcus agalactiae serotype III (strain NEM316).